The following is a 187-amino-acid chain: Protein GrpE (187 aa).

The disordered stretch occupies residues 1-23; the sequence is MADEQNLDAQAQDQAAEAGAGEE. Over residues 7–23 the composition is skewed to low complexity; it reads LDAQAQDQAAEAGAGEE.

It belongs to the GrpE family. In terms of assembly, homodimer.

The protein localises to the cytoplasm. In terms of biological role, participates actively in the response to hyperosmotic and heat shock by preventing the aggregation of stress-denatured proteins, in association with DnaK and GrpE. It is the nucleotide exchange factor for DnaK and may function as a thermosensor. Unfolded proteins bind initially to DnaJ; upon interaction with the DnaJ-bound protein, DnaK hydrolyzes its bound ATP, resulting in the formation of a stable complex. GrpE releases ADP from DnaK; ATP binding to DnaK triggers the release of the substrate protein, thus completing the reaction cycle. Several rounds of ATP-dependent interactions between DnaJ, DnaK and GrpE are required for fully efficient folding. The sequence is that of Protein GrpE from Pseudomonas savastanoi pv. phaseolicola (strain 1448A / Race 6) (Pseudomonas syringae pv. phaseolicola (strain 1448A / Race 6)).